Here is a 1155-residue protein sequence, read N- to C-terminus: MNHFQAILAQVQTLLSSQKPRQVRALLDGLLEEELLSREYHCALLHEPDGDALARKISLTLLEKGDLDLTFLSWVCNSLQAPTVERGTSYRDHGDHSLCATMDLGSPEGSYLELLNSDADPLHLYHLYDQMDLAGEEEIELSSEPDTDTINCDQFSKLLQDMELDEETREAYANIAELDQYVFQDTQLEGLSKDLFIEHIGAEEGFGENIEIPVEAGQKPQKRRFPEEHAMDSKHRKLVPTSRTSLNYLDLPTGHIQIFTTLPQGLWQISGAGTGLSSVLIYHGEMPQVNQVLPSSSLSIPSLPESPDRPGSTSPFTPSAADLPSMPEPALTSRVNETEDTSPSPCQEGPESSIKLPKWPEAVERFQHSLQDKYKALPQSPRGPLVAVELVRARLERGSNKSQERELATPDWTERQLAHGGLAEVLQVVSDCRRPGETQVVAVLGKAGQGKSHWARTVSHTWACGQLLQYDFVFYVPCHCLDRPGDTYHLRDLLCPPSLQPLAMDDEVLDYIVRQPDRVLLILDAFEELEAQDGLLHGPCGSLSPEPCSLRGLLAGIFQRKLLRGCTLLLTARPRGRLAQSLSKADAIFEVPSFSTKQAKTYMRHYFENSGTAGNQDKALGLLEGQPLLCSYSHSPVVCRAVCQLSKALLEQGTEAQLPCTLTGLYVSLLGPAAQNSPPGALVELAKLAWELGRRHQSTLQETRFSSVEVKTWAVTQGLMQQTLETTEAQLAFSSFLLQCFLGAVWLAQCNEIKDKELPQYLALTPRKKRPYDNWLEGVPRFLAGLVFQPRAHCLGALVEPAVAAVADRKQKVLTRYLKRLKLGTLRAGRLLELLHCAHETQQPGIWEHVAHQLPGHLSFLGTRLTPPDVYVLGRALETASQDFSLDLRQTGVEPSGLGNLVGLSCVTSFRASLSDTMALWESLQQQGEAQLLQAAEEKFTIEPFKAKSPKDVEDLDRLVQTQRLRNPSEDAAKDLPAIRDLKKLEFALGPILGPQAFPTLAKILPAFSSLQHLDLDSLSENKIGDKGVSKLSATFPQLKALETLNLSQNNITDVGACKLAEALPALAKSLLRLSLYNNCICDKGAKSLAQVLPDMVSLRVMDVQFNKFTAAGAQQLASSLQKCPQVETLAMWTPTIPFGVQEHLQQLDARISLR.

The required for acetyltransferase activity stretch occupies residues 171 to 210 (AYANIAELDQYVFQDTQLEGLSKDLFIEHIGAEEGFGENI). Disordered stretches follow at residues 217 to 237 (GQKPQKRRFPEEHAMDSKHRK) and 297 to 357 (SLSI…IKLP). A compositionally biased stretch (basic and acidic residues) spans 224 to 233 (RFPEEHAMDS). Residues 439-749 (QVVAVLGKAG…CFLGAVWLAQ (311 aa)) form the NACHT domain. 445–452 (GKAGQGKS) is a binding site for GTP. 4 LRR repeats span residues 1010-1033 (SLQHLDLDSLSENKIGDKGVSKLS), 1041-1062 (ALETLNLSQNNITDVGACKLAE), 1070-1091 (SLLRLSLYNNCICDKGAKSLAQ), and 1098-1119 (SLRVMDVQFNKFTAAGAQQLAS).

In terms of assembly, interacts with ZXDA and ZXDC. Interacts with PML (isoform PML-2). Interacts with TAF7; interaction inhibits CIITA acetyltransferase activity, thereby repressing transcription. Autophosphorylated, affecting interaction with TAF7. In terms of tissue distribution, expressed at very high levels in dendritic cells, at very low levels in spleen and thymus and is not detected in other tissues. Detected at high levels in spleen and tonsil as well as in a number of B-lymphocyte cell lines, and at very low levels in dendritic cells.

Its subcellular location is the nucleus. It is found in the PML body. It catalyses the reaction L-seryl-[protein] + ATP = O-phospho-L-seryl-[protein] + ADP + H(+). It carries out the reaction L-threonyl-[protein] + ATP = O-phospho-L-threonyl-[protein] + ADP + H(+). In terms of biological role, essential for transcriptional activity of the HLA class II promoter; activation is via the proximal promoter. Does not bind DNA. May act in a coactivator-like fashion through protein-protein interactions by contacting factors binding to the proximal MHC class II promoter, to elements of the transcription machinery, or both. Alternatively it may activate HLA class II transcription by modifying proteins that bind to the MHC class II promoter. Also mediates enhanced MHC class I transcription, the promoter element requirements for CIITA-mediated transcription are distinct from those of constitutive MHC class I transcription, and CIITA can functionally replace TAF1 at these genes. Activates CD74 transcription. Exhibits intrinsic GTP-stimulated acetyltransferase activity. Exhibits serine/threonine protein kinase activity: phosphorylates the TFIID component TAF7, the RAP74 subunit of the general transcription factor TFIIF, histone H2B at 'Ser-37' and other histones. The chain is MHC class II transactivator from Mus musculus (Mouse).